Here is a 377-residue protein sequence, read N- to C-terminus: Spermidine/putrescine import ATP-binding protein PotA (377 aa).

An ABC transporter domain is found at 22 to 252; the sequence is VRLQNVTKRF…PANRFVADFI (231 aa). 54–61 serves as a coordination point for ATP; that stretch reads GPSGCGKT.

The protein belongs to the ABC transporter superfamily. Spermidine/putrescine importer (TC 3.A.1.11.1) family. As to quaternary structure, the complex is composed of two ATP-binding proteins (PotA), two transmembrane proteins (PotB and PotC) and a solute-binding protein (PotD).

The protein resides in the cell membrane. It carries out the reaction ATP + H2O + polyamine-[polyamine-binding protein]Side 1 = ADP + phosphate + polyamineSide 2 + [polyamine-binding protein]Side 1.. Its function is as follows. Part of the ABC transporter complex PotABCD involved in spermidine/putrescine import. Responsible for energy coupling to the transport system. The sequence is that of Spermidine/putrescine import ATP-binding protein PotA from Rubrobacter xylanophilus (strain DSM 9941 / JCM 11954 / NBRC 16129 / PRD-1).